Reading from the N-terminus, the 140-residue chain is Ribosome maturation factor RimP (140 aa).

It belongs to the RimP family.

It is found in the cytoplasm. Functionally, required for maturation of 30S ribosomal subunits. The protein is Ribosome maturation factor RimP of Campylobacter jejuni subsp. jejuni serotype O:23/36 (strain 81-176).